The following is a 285-amino-acid chain: Malectin (285 aa).

The signal sequence occupies residues 1-26 (MRRVTLHCAARLVIAALWLLVEVCRA). Topologically, residues 27–262 (ESGAQSLAER…TPNPYATDNS (236 aa)) are lumenal. Positions 71, 93, 120, 121, and 190 each coordinate a carbohydrate. The tract at residues 209-258 (KLQPHPGLEKREEEEEEEEEGEGPEGEKKSASTSPKNPVRSGPRTPNPYA) is disordered. A compositionally biased stretch (acidic residues) spans 220 to 232 (EEEEEEEEEGEGP). N-linked (GlcNAc...) asparagine glycosylation is present at asparagine 261. Residues 263 to 283 (SLMFPILVAFGVFIPTLFCLC) form a helical membrane-spanning segment. Over 284–285 (RL) the chain is Cytoplasmic.

The protein belongs to the malectin family.

It is found in the endoplasmic reticulum membrane. Functionally, carbohydrate-binding protein with a strong ligand preference for Glc2-N-glycan. May play a role in the early steps of protein N-glycosylation. The sequence is that of Malectin from Danio rerio (Zebrafish).